The following is a 589-amino-acid chain: Aspartate--tRNA ligase (589 aa).

L-aspartate is bound at residue Glu174. Residues 198-201 form an aspartate region; sequence QLFK. Arg220 contributes to the L-aspartate binding site. Residues 220 to 222 and Gln229 contribute to the ATP site; that span reads RDE. His448 contacts L-aspartate. Glu483 serves as a coordination point for ATP. Arg490 is an L-aspartate binding site. Position 535–538 (535–538) interacts with ATP; that stretch reads GIDR.

The protein belongs to the class-II aminoacyl-tRNA synthetase family. Type 1 subfamily. Homodimer.

The protein resides in the cytoplasm. It carries out the reaction tRNA(Asp) + L-aspartate + ATP = L-aspartyl-tRNA(Asp) + AMP + diphosphate. Functionally, catalyzes the attachment of L-aspartate to tRNA(Asp) in a two-step reaction: L-aspartate is first activated by ATP to form Asp-AMP and then transferred to the acceptor end of tRNA(Asp). The protein is Aspartate--tRNA ligase of Xylella fastidiosa (strain M12).